The sequence spans 192 residues: MKRLEVSNQAKLPTQFGEFYIQCFREKNSNGSKDHLVIFTLDFPENPLVRLHSECLTGDALGSQKCDCGVALQMALERISKEGGLVIYLRQEGRGIGLFNKVNAYALQDKGYDTIQANEMIGFKDDERDYGIAGEILEYYRIKKMRLLTNNPKKIAALEKYAEVTRESLIVCANEHNQGYLEVKKLKMGHLL.

GTP is bound at residue 50 to 54 (RLHSE). Zn(2+)-binding residues include Cys-55, Cys-66, and Cys-68. GTP contacts are provided by residues 92 to 94 (EGR) and Thr-114. Residue Asp-126 is the Proton acceptor of the active site. Arg-128 acts as the Nucleophile in catalysis. GTP-binding residues include Thr-149 and Lys-154.

Belongs to the GTP cyclohydrolase II family. It depends on Zn(2+) as a cofactor.

The catalysed reaction is GTP + 4 H2O = 2,5-diamino-6-hydroxy-4-(5-phosphoribosylamino)-pyrimidine + formate + 2 phosphate + 3 H(+). The protein operates within cofactor biosynthesis; riboflavin biosynthesis; 5-amino-6-(D-ribitylamino)uracil from GTP: step 1/4. Catalyzes the conversion of GTP to 2,5-diamino-6-ribosylamino-4(3H)-pyrimidinone 5'-phosphate (DARP), formate and pyrophosphate. The protein is GTP cyclohydrolase-2 of Helicobacter acinonychis (strain Sheeba).